Consider the following 235-residue polypeptide: UPF0749 protein YlxX (235 aa).

Residues 6-26 (SFISISVLMVIFGLMISVQFN) traverse the membrane as a helical segment.

The protein belongs to the UPF0749 family.

The protein localises to the cell membrane. The protein is UPF0749 protein YlxX (ylxX) of Bacillus subtilis (strain 168).